The sequence spans 1185 residues: Ubiquitin carboxyl-terminal hydrolase 36 (1185 aa).

Residues 126–169 are compositionally biased toward polar residues; the sequence is TGKALSSNGHDNTNGVNGSSAATVNGNRKQTVEQSNQNSTTNPN. A disordered region spans residues 126 to 174; it reads TGKALSSNGHDNTNGVNGSSAATVNGNRKQTVEQSNQNSTTNPNELPKP. The USP domain occupies 199-509; that stretch reads AGMLNVGNTC…NAYIMFYELD (311 aa). Cysteine 208 functions as the Nucleophile in the catalytic mechanism. Histidine 468 acts as the Proton acceptor in catalysis. 2 positions are modified to phosphoserine: serine 552 and serine 554. Low complexity predominate over residues 642 to 658; the sequence is ANSNKSSCNNNTLTTNS. 4 disordered regions span residues 642-804, 818-975, 1056-1122, and 1136-1185; these read ANSN…TDAI, HRAT…YQSE, APTL…GSFP, and NKFK…QQQS. Acidic residues predominate over residues 670 to 683; sequence SDEEDEDEDSDDDV. The residue at position 716 (threonine 716) is a Phosphothreonine. Phosphoserine occurs at positions 726 and 728. Low complexity-rich tracts occupy residues 778–797 and 836–853; these read KSNG…SNNN and QQQQ…SLIS. A Phosphoserine modification is found at serine 867. At threonine 870 the chain carries Phosphothreonine. Phosphoserine is present on serine 873. The segment covering 891–920 has biased composition (acidic residues); it reads DDNDDDDEDADEEDDADADAEQEEYDDEVV. 2 stretches are compositionally biased toward polar residues: residues 924–942 and 959–975; these read TTPS…SKPS and SAKS…YQSE. A Phosphothreonine modification is found at threonine 925. Basic and acidic residues predominate over residues 1062–1071; sequence EAREQRKRDA. 2 stretches are compositionally biased toward low complexity: residues 1151–1161 and 1172–1185; these read QQQRALQRHLA and QSTG…QQQS.

The protein belongs to the peptidase C19 family. As to quaternary structure, interacts with atms/PAF1, but not with CycT.

It localises to the nucleus. The protein localises to the nucleolus. It catalyses the reaction Thiol-dependent hydrolysis of ester, thioester, amide, peptide and isopeptide bonds formed by the C-terminal Gly of ubiquitin (a 76-residue protein attached to proteins as an intracellular targeting signal).. Functionally, required for maintaining multiple types of adult stem cells, including male and female germline, epithelial follicle cell and intestinal stem cells. May function as a transcriptional repressor by continually deubiquiting histone H2B at the promoters of genes critical for cellular differentiation, thereby preventing histone H3 'Lys-4' trimethylation (H3K4). Controls selective autophagy activation by ubiquitinated proteins. The chain is Ubiquitin carboxyl-terminal hydrolase 36 (Usp36) from Drosophila mojavensis (Fruit fly).